The primary structure comprises 496 residues: Thiamine transporter 2 (496 aa).

At M1 to S7 the chain is on the cytoplasmic side. A helical membrane pass occupies residues P8 to M28. Residues R29–N53 lie on the Extracellular side of the membrane. N45 is a glycosylation site (N-linked (GlcNAc...) asparagine). Residues E54–T74 form a helical membrane-spanning segment. Over D75–P81 the chain is Cytoplasmic. The chain crosses the membrane as a helical span at residues V82–G102. The Extracellular portion of the chain corresponds to V103–E110. A helical transmembrane segment spans residues F111–V131. The Cytoplasmic portion of the chain corresponds to S132–R144. The chain crosses the membrane as a helical span at residues S145–A165. N-linked (GlcNAc...) asparagine glycosylation is present at N166. Over N166 to Y169 the chain is Extracellular. The chain crosses the membrane as a helical span at residues F170–L190. The Cytoplasmic portion of the chain corresponds to P191–S282. The tract at residues S210–Q248 is disordered. Basic and acidic residues predominate over residues E218–P233. A compositionally biased stretch (polar residues) spans T234–Q248. The helical transmembrane segment at L283 to W303 threads the bilayer. Residues D304–N316 are Extracellular-facing. Residues G317–V337 traverse the membrane as a helical segment. At K338–D342 the chain is on the cytoplasmic side. The helical transmembrane segment at L343 to M363 threads the bilayer. The Extracellular segment spans residues H364 to G375. Residues Y376–V396 form a helical membrane-spanning segment. Over N397 to L405 the chain is Cytoplasmic. A helical membrane pass occupies residues V406–V426. At D427–P434 the chain is on the extracellular side. The chain crosses the membrane as a helical span at residues I435–M455. Over R456–L496 the chain is Cytoplasmic. The interval D469–L496 is disordered.

Belongs to the reduced folate carrier (RFC) transporter (TC 2.A.48) family.

It is found in the membrane. It carries out the reaction thiamine(out) + H(+)(in) = thiamine(in) + H(+)(out). The catalysed reaction is pyridoxine(out) + n H(+)(out) = pyridoxine(in) + n H(+)(in). In terms of biological role, mediates high affinity thiamine uptake, probably via a proton anti-port mechanism. Has no folate transport activity. Mediates H(+)-dependent pyridoxine transport. This is Thiamine transporter 2 (SLC19A3) from Macaca fascicularis (Crab-eating macaque).